Reading from the N-terminus, the 291-residue chain is Polyamine aminopropyltransferase (291 aa).

A PABS domain is found at 5-245; that stretch reads PGPIVLMEPL…YAVNFVLGSL (241 aa). Q36 is an S-methyl-5'-thioadenosine binding site. Spermidine contacts are provided by H67 and E91. S-methyl-5'-thioadenosine is bound by residues D111 and 143-144; that span reads DG. The active-site Proton acceptor is the D164.

Belongs to the spermidine/spermine synthase family. In terms of assembly, homodimer or homotetramer.

Its subcellular location is the cytoplasm. The catalysed reaction is norspermidine + S-adenosyl 3-(methylsulfanyl)propylamine = norspermine + S-methyl-5'-thioadenosine + H(+). The enzyme catalyses S-adenosyl 3-(methylsulfanyl)propylamine + spermidine = thermospermine + S-methyl-5'-thioadenosine + H(+). Its function is as follows. Involved in the biosynthesis of polyamines which are thought to support the growth of thermophilic microorganisms under high-temperature conditions. It seems that long-chain and branched-chain of polyamines effectively stabilize DNA and RNA, respectively. Catalyzes the irreversible transfer of a propylamine group from the amino donor S-adenosylmethioninamine (decarboxy-AdoMet) to norspermidine and 1,3-diaminopropane to yield norspermine, and to spermidine to yield thermospermine. It can also synthesize thermospermine from putrescine (1,4-diaminobutane) and caldopentamine from norspermine with a very low activity. The biosynthesis of caldohexamine and caldoheptamine from caldopentamine has been also observed. The polypeptide is Polyamine aminopropyltransferase (Pyrobaculum aerophilum (strain ATCC 51768 / DSM 7523 / JCM 9630 / CIP 104966 / NBRC 100827 / IM2)).